A 177-amino-acid chain; its full sequence is ATP synthase subunit delta (177 aa).

It belongs to the ATPase delta chain family. As to quaternary structure, F-type ATPases have 2 components, F(1) - the catalytic core - and F(0) - the membrane proton channel. F(1) has five subunits: alpha(3), beta(3), gamma(1), delta(1), epsilon(1). F(0) has three main subunits: a(1), b(2) and c(10-14). The alpha and beta chains form an alternating ring which encloses part of the gamma chain. F(1) is attached to F(0) by a central stalk formed by the gamma and epsilon chains, while a peripheral stalk is formed by the delta and b chains.

It localises to the cell inner membrane. Its function is as follows. F(1)F(0) ATP synthase produces ATP from ADP in the presence of a proton or sodium gradient. F-type ATPases consist of two structural domains, F(1) containing the extramembraneous catalytic core and F(0) containing the membrane proton channel, linked together by a central stalk and a peripheral stalk. During catalysis, ATP synthesis in the catalytic domain of F(1) is coupled via a rotary mechanism of the central stalk subunits to proton translocation. This protein is part of the stalk that links CF(0) to CF(1). It either transmits conformational changes from CF(0) to CF(1) or is implicated in proton conduction. In Shewanella halifaxensis (strain HAW-EB4), this protein is ATP synthase subunit delta.